The chain runs to 357 residues: Nicotinate-nucleotide--dimethylbenzimidazole phosphoribosyltransferase (357 aa).

The active-site Proton acceptor is the Glu-323.

The protein belongs to the CobT family.

It catalyses the reaction 5,6-dimethylbenzimidazole + nicotinate beta-D-ribonucleotide = alpha-ribazole 5'-phosphate + nicotinate + H(+). It functions in the pathway nucleoside biosynthesis; alpha-ribazole biosynthesis; alpha-ribazole from 5,6-dimethylbenzimidazole: step 1/2. Functionally, catalyzes the synthesis of alpha-ribazole-5'-phosphate from nicotinate mononucleotide (NAMN) and 5,6-dimethylbenzimidazole (DMB). The sequence is that of Nicotinate-nucleotide--dimethylbenzimidazole phosphoribosyltransferase from Nitratidesulfovibrio vulgaris (strain ATCC 29579 / DSM 644 / CCUG 34227 / NCIMB 8303 / VKM B-1760 / Hildenborough) (Desulfovibrio vulgaris).